We begin with the raw amino-acid sequence, 908 residues long: 5'-3' exoribonuclease 2 homolog (908 aa).

Residues 263–280 form a CCHC-type zinc finger; the sequence is RPCDICNGFGHEMDKCVG. Disordered stretches follow at residues 409–457 and 821–908; these read RQRR…VGNY and GGNQ…YRRF. The span at 432 to 454 shows a compositional bias: polar residues; the sequence is HGSLNQSAFGASAVGPNSQQRSV. S438 carries the phosphoserine modification. 2 stretches are compositionally biased toward low complexity: residues 825–868 and 878–908; these read GQSY…HNQR and QRNFNNYNGPRNNNYQQQGGSRQQNQNYRRF.

This sequence belongs to the 5'-3' exonuclease family. XRN2/RAT1 subfamily. Interacts with cuff and Rai1; the interaction with cuff may inhibit its role in RNA degradation.

It is found in the nucleus. Its function is as follows. A 5'-3' exoribonuclease. May promote the termination of transcription by RNA polymerase II and promote RNA degradation. Involved in turnover of piRNA precursors. The polypeptide is 5'-3' exoribonuclease 2 homolog (Drosophila melanogaster (Fruit fly)).